Here is a 466-residue protein sequence, read N- to C-terminus: Methylenetetrahydrofolate--tRNA-(uracil-5-)-methyltransferase TrmFO (466 aa).

An FAD-binding site is contributed by Gly12–Gly17.

The protein belongs to the MnmG family. TrmFO subfamily. FAD is required as a cofactor.

It localises to the cytoplasm. The catalysed reaction is uridine(54) in tRNA + (6R)-5,10-methylene-5,6,7,8-tetrahydrofolate + NADH + H(+) = 5-methyluridine(54) in tRNA + (6S)-5,6,7,8-tetrahydrofolate + NAD(+). It catalyses the reaction uridine(54) in tRNA + (6R)-5,10-methylene-5,6,7,8-tetrahydrofolate + NADPH + H(+) = 5-methyluridine(54) in tRNA + (6S)-5,6,7,8-tetrahydrofolate + NADP(+). Functionally, catalyzes the folate-dependent formation of 5-methyl-uridine at position 54 (M-5-U54) in all tRNAs. The polypeptide is Methylenetetrahydrofolate--tRNA-(uracil-5-)-methyltransferase TrmFO (Synechococcus elongatus (strain ATCC 33912 / PCC 7942 / FACHB-805) (Anacystis nidulans R2)).